A 123-amino-acid polypeptide reads, in one-letter code: Thioredoxin domain-containing protein 17 (123 aa).

A2 carries the N-acetylalanine modification. Residues 41–123 (SWCPDCVEAE…SLVEMIFSED (83 aa)) enclose the Thioredoxin domain. Residues C43 and C46 each act as nucleophile in the active site. C43 and C46 are oxidised to a cystine.

Belongs to the thioredoxin family. As to quaternary structure, interacts with TRXR1 and DYNLL1/DNCL1. In terms of processing, the oxidized protein is reduced by TRXR1.

It localises to the cytoplasm. In terms of biological role, disulfide reductase. May participate in various redox reactions through the reversible oxidation of its active center dithiol to a disulfide and catalyze dithiol-disulfide exchange reactions. Modulates TNF-alpha signaling and NF-kappa-B activation. Has peroxidase activity and may contribute to the elimination of cellular hydrogen peroxide. The chain is Thioredoxin domain-containing protein 17 (Txndc17) from Mus musculus (Mouse).